The sequence spans 259 residues: Type III pantothenate kinase (259 aa).

Position 9-16 (9-16 (DAGNSRIK)) interacts with ATP. Substrate-binding positions include Y93 and 100–103 (GSDR). D102 acts as the Proton acceptor in catalysis. Residue T126 participates in ATP binding. Substrate is bound at residue T190.

The protein belongs to the type III pantothenate kinase family. Homodimer. NH4(+) is required as a cofactor. The cofactor is K(+).

The protein resides in the cytoplasm. The catalysed reaction is (R)-pantothenate + ATP = (R)-4'-phosphopantothenate + ADP + H(+). It participates in cofactor biosynthesis; coenzyme A biosynthesis; CoA from (R)-pantothenate: step 1/5. In terms of biological role, catalyzes the phosphorylation of pantothenate (Pan), the first step in CoA biosynthesis. The chain is Type III pantothenate kinase from Burkholderia thailandensis (strain ATCC 700388 / DSM 13276 / CCUG 48851 / CIP 106301 / E264).